A 221-amino-acid polypeptide reads, in one-letter code: Transcription factor HES-4 (221 aa).

Residues Met1–Ser22 are compositionally biased toward low complexity. The disordered stretch occupies residues Met1 to Arg49. Basic and acidic residues predominate over residues Thr24 to Arg35. The bHLH domain occupies His34–Leu91. Residues Tyr110–Leu143 form the Orange domain. A disordered region spans residues Leu201 to Arg221. The WRPW motif signature appears at Trp216–Trp219.

In terms of assembly, transcription repression requires formation of a complex with a corepressor protein of the Groucho/TLE family.

The protein resides in the nucleus. Functionally, transcriptional repressor. Binds DNA on N-box motifs: 5'-CACNAG-3'. This is Transcription factor HES-4 (HES4) from Homo sapiens (Human).